Consider the following 72-residue polypeptide: SRY-related protein ADW2 (72 aa).

Residues 1 to 69 (VKRPMNAFMV…KHMADYADYK (69 aa)) constitute a DNA-binding region (HMG box).

The protein localises to the nucleus. This Alligator mississippiensis (American alligator) protein is SRY-related protein ADW2.